The following is a 394-amino-acid chain: Acryloyl-CoA reductase (NADH) (394 aa).

FAD is bound by residues 135-144 (FALTEPNAGS) and 170-172 (FIS). Serine 144 contacts substrate. Residue 254–257 (DGAR) coordinates substrate. FAD-binding positions include arginine 282, glutamine 293, and 350-354 (QIHGG). Residue glutamate 377 is the Proton acceptor of the active site. Glycine 378 is a binding site for substrate. Residue 379–381 (TSE) coordinates FAD.

In terms of assembly, heterohexadecamer; tetramer of tetramers. Each tetramer is composed of 2 alpha (AcrC), a beta (AcrA) and a gamma (AcrB) subunit. FAD is required as a cofactor.

It localises to the cytoplasm. It catalyses the reaction propanoyl-CoA + NAD(+) = acryloyl-CoA + NADH + H(+). Its function is as follows. Probable catalytic subunit of the acryloyl-CoA reductase complex involved in the pathway of L-alanine fermentation. Catalyzes the irreversible NADH-dependent formation of propionyl-CoA from acryloyl-CoA. It can also use 3-buten-2-one as substrate. The protein is Acryloyl-CoA reductase (NADH) (acrC) of Anaerotignum propionicum (Clostridium propionicum).